Here is a 170-residue protein sequence, read N- to C-terminus: Peptide deformylase 1 (170 aa).

Residues C91 and H133 each contribute to the Fe cation site. E134 is a catalytic residue. Residue H137 participates in Fe cation binding.

The protein belongs to the polypeptide deformylase family. It depends on Fe(2+) as a cofactor.

It carries out the reaction N-terminal N-formyl-L-methionyl-[peptide] + H2O = N-terminal L-methionyl-[peptide] + formate. In terms of biological role, removes the formyl group from the N-terminal Met of newly synthesized proteins. Requires at least a dipeptide for an efficient rate of reaction. N-terminal L-methionine is a prerequisite for activity but the enzyme has broad specificity at other positions. This Vibrio vulnificus (strain CMCP6) protein is Peptide deformylase 1.